We begin with the raw amino-acid sequence, 254 residues long: Mamu class II histocompatibility antigen, DR alpha chain (254 aa).

The N-terminal stretch at 1-25 (MAESGVPVLGFFIIAVLMSAQESWA) is a signal peptide. Positions 26-109 (IKEEHVIIQA…KRSNNTPITN (84 aa)) are alpha-1. The Extracellular segment spans residues 26 to 216 (IKEEHVIIQA…APSPLPETTE (191 aa)). Asparagine 103 carries an N-linked (GlcNAc...) asparagine glycan. The alpha-2 stretch occupies residues 110 to 203 (VPPEVTVLTN…CLDAPLLKHW (94 aa)). Residues 112-204 (PEVTVLTNSP…LDAPLLKHWE (93 aa)) enclose the Ig-like C1-type domain. Residues cysteine 132 and cysteine 188 are joined by a disulfide bond. A connecting peptide region spans residues 204 to 216 (EFDAPSPLPETTE). A helical membrane pass occupies residues 217–239 (NVVCALGLIVGLVGIIVGTVFII). Residues 240-254 (KGVRKSNAAERRGPL) are Cytoplasmic-facing. Lysine 244 is covalently cross-linked (Glycyl lysine isopeptide (Lys-Gly) (interchain with G-Cter in ubiquitin)).

It belongs to the MHC class II family. As to quaternary structure, heterodimer of an alpha chain and a beta chain.

It localises to the membrane. The polypeptide is Mamu class II histocompatibility antigen, DR alpha chain (Mamu-DRA) (Macaca mulatta (Rhesus macaque)).